Here is a 699-residue protein sequence, read N- to C-terminus: Protein phosphatase 1 regulatory subunit 37 (699 aa).

Pro residues predominate over residues 1–12 (MEIPPQEAPPGP). The disordered stretch occupies residues 1–42 (MEIPPQEAPPGPGADGEAEEAPVEAPSPGPASPPADGRLKAA). 2 positions are modified to phosphoserine: serine 50 and serine 56. LRR repeat units lie at residues 220–240 (SLAVLHLESSSLSGRPLMLLA), 248–269 (TLRELYLADNKLNGLQDSAQLG), 277–297 (SLQILDLRNNHVLDSGLAYIC), 306–326 (GLATLVLWNNQLTHTGMAFLG), and 334–354 (SLETLNLGHNPIGNEGVRNLK). The disordered stretch occupies residues 467–667 (RLQLSASMPE…PPGPEAKVGS (201 aa)). Positions 510–525 (SDSDSDSEGEDRDEAD) are enriched in acidic residues. Serine 566 bears the Phosphoserine mark. Composition is skewed to pro residues over residues 588-613 (PPVPPAPPGPVSPPASASPPTSPFPT) and 622-642 (DPGPPEPQPPLEPPQVGPPLP).

The protein belongs to the PPP1R37 family. As to quaternary structure, interacts with PPP1CA.

Its function is as follows. Inhibits phosphatase activity of protein phosphatase 1 (PP1) complexes. The sequence is that of Protein phosphatase 1 regulatory subunit 37 (PPP1R37) from Bos taurus (Bovine).